Here is a 263-residue protein sequence, read N- to C-terminus: MNDNFKKQPHHLIYEELLQQGITLGITTRGDGLSDYPKNAFNMARYIDDRPYNITQHQLQLAEEIAFDRKNWVFPIQTHENKVACITKDDIGTNIDTLTDALHGIDAMYTYDSNVLLTMCYADCVPVYFYSTKHHFIALAHAGWRGTYTEIVKEVLKHVNFDLKDLHVVIGPSTSSSYEINDDIKNKFETLPIDSANYIETRGRDRHGIDLKKANAALLIYYGVPKENIYTTAYATSEHLELFFSYRLEKGQTGRMLAFIGQQ.

3 residues coordinate Zn(2+): His79, Cys124, and His141.

Belongs to the purine nucleoside phosphorylase YfiH/LACC1 family. Homodimer. The cofactor is Cu(2+). Zn(2+) is required as a cofactor.

It catalyses the reaction adenosine + phosphate = alpha-D-ribose 1-phosphate + adenine. The catalysed reaction is S-methyl-5'-thioadenosine + phosphate = 5-(methylsulfanyl)-alpha-D-ribose 1-phosphate + adenine. It carries out the reaction inosine + phosphate = alpha-D-ribose 1-phosphate + hypoxanthine. The enzyme catalyses adenosine + H2O + H(+) = inosine + NH4(+). Its function is as follows. Purine nucleoside enzyme that catalyzes the phosphorolysis of adenosine and inosine nucleosides, yielding D-ribose 1-phosphate and the respective free bases, adenine and hypoxanthine. Also catalyzes the phosphorolysis of S-methyl-5'-thioadenosine into adenine and S-methyl-5-thio-alpha-D-ribose 1-phosphate. Also has adenosine deaminase activity. The protein is Purine nucleoside phosphorylase SACOL1200 of Staphylococcus aureus (strain COL).